The primary structure comprises 185 residues: Pyruvate/ketoisovalerate oxidoreductases common subunit gamma (185 aa).

Heterotetramer of one alpha, one beta, one delta and one gamma chain.

It catalyses the reaction 2 oxidized [2Fe-2S]-[ferredoxin] + pyruvate + CoA = 2 reduced [2Fe-2S]-[ferredoxin] + acetyl-CoA + CO2 + H(+). It carries out the reaction 3-methyl-2-oxobutanoate + 2 oxidized [2Fe-2S]-[ferredoxin] + CoA = 2-methylpropanoyl-CoA + 2 reduced [2Fe-2S]-[ferredoxin] + CO2 + H(+). The polypeptide is Pyruvate/ketoisovalerate oxidoreductases common subunit gamma (porG) (Pyrococcus furiosus (strain ATCC 43587 / DSM 3638 / JCM 8422 / Vc1)).